A 56-amino-acid polypeptide reads, in one-letter code: Bowman-Birk type proteinase inhibitor I-2B (56 aa).

4 disulfides stabilise this stretch: cysteine 10/cysteine 25, cysteine 15/cysteine 23, cysteine 32/cysteine 39, and cysteine 36/cysteine 51.

It belongs to the Bowman-Birk serine protease inhibitor family.

This Triticum aestivum (Wheat) protein is Bowman-Birk type proteinase inhibitor I-2B.